The following is a 237-amino-acid chain: Ribonuclease PH (237 aa).

Phosphate is bound by residues Arg86 and 124 to 126; that span reads GTR.

The protein belongs to the RNase PH family. As to quaternary structure, homohexameric ring arranged as a trimer of dimers.

It catalyses the reaction tRNA(n+1) + phosphate = tRNA(n) + a ribonucleoside 5'-diphosphate. Functionally, phosphorolytic 3'-5' exoribonuclease that plays an important role in tRNA 3'-end maturation. Removes nucleotide residues following the 3'-CCA terminus of tRNAs; can also add nucleotides to the ends of RNA molecules by using nucleoside diphosphates as substrates, but this may not be physiologically important. Probably plays a role in initiation of 16S rRNA degradation (leading to ribosome degradation) during starvation. This chain is Ribonuclease PH, found in Tolumonas auensis (strain DSM 9187 / NBRC 110442 / TA 4).